A 253-amino-acid chain; its full sequence is UPF0246 protein LBA1843 (253 aa).

This sequence belongs to the UPF0246 family.

The sequence is that of UPF0246 protein LBA1843 from Lactobacillus acidophilus (strain ATCC 700396 / NCK56 / N2 / NCFM).